Here is a 267-residue protein sequence, read N- to C-terminus: MRRIAVMGAAGRMGKTLIEAVQQTSGAGLTAAIDRPDSSLVGADAGELAALGRIGVLLSDDLAKVADEFDVLIDFTHPSVTLKNLAFCRKHGKAMIIGTTGFTVEEKQLLAEAGKDIPIVFAANFSVGVNLSLKLLDMAARVLGDDVDIEIIEAHHRHKVDAPSGTALRMGEVVANALGRDLQEVAVYGREGQTGARDRKTIGFATVRAGDVVGDHTVLFAAEGERLEITHKASSRMTFAKGAVRAALWLDGREPGLYDMQDVLELR.

Residues 8-13 (GAAGRM) and Asp34 each bind NAD(+). Arg35 lines the NADP(+) pocket. NAD(+) is bound by residues 98–100 (GTT) and 122–125 (AANF). The Proton donor/acceptor role is filled by His155. His156 contacts (S)-2,3,4,5-tetrahydrodipicolinate. Catalysis depends on Lys159, which acts as the Proton donor. Residue 165 to 166 (GT) coordinates (S)-2,3,4,5-tetrahydrodipicolinate.

It belongs to the DapB family.

It localises to the cytoplasm. It catalyses the reaction (S)-2,3,4,5-tetrahydrodipicolinate + NAD(+) + H2O = (2S,4S)-4-hydroxy-2,3,4,5-tetrahydrodipicolinate + NADH + H(+). The catalysed reaction is (S)-2,3,4,5-tetrahydrodipicolinate + NADP(+) + H2O = (2S,4S)-4-hydroxy-2,3,4,5-tetrahydrodipicolinate + NADPH + H(+). Its pathway is amino-acid biosynthesis; L-lysine biosynthesis via DAP pathway; (S)-tetrahydrodipicolinate from L-aspartate: step 4/4. Its function is as follows. Catalyzes the conversion of 4-hydroxy-tetrahydrodipicolinate (HTPA) to tetrahydrodipicolinate. This Pseudomonas putida (strain ATCC 700007 / DSM 6899 / JCM 31910 / BCRC 17059 / LMG 24140 / F1) protein is 4-hydroxy-tetrahydrodipicolinate reductase.